The following is a 324-amino-acid chain: Pyruvate synthase subunit PorB (324 aa).

Positions 26, 29, and 57 each coordinate [4Fe-4S] cluster. The tract at residues 150–172 is disordered; that stretch reads TGNQRSGSTPPGSDTTTAPVGKK. Over residues 155-166 the composition is skewed to low complexity; that stretch reads SGSTPPGSDTTT. Cys-228 is a [4Fe-4S] cluster binding site.

In terms of assembly, heterotetramer of one alpha, one beta, one delta and one gamma chain. It depends on [4Fe-4S] cluster as a cofactor.

It carries out the reaction 2 oxidized [2Fe-2S]-[ferredoxin] + pyruvate + CoA = 2 reduced [2Fe-2S]-[ferredoxin] + acetyl-CoA + CO2 + H(+). This is Pyruvate synthase subunit PorB (porB) from Thermotoga maritima (strain ATCC 43589 / DSM 3109 / JCM 10099 / NBRC 100826 / MSB8).